Here is a 643-residue protein sequence, read N- to C-terminus: Maternal embryonic leucine zipper kinase (643 aa).

In terms of domain architecture, Protein kinase spans 11-263; the sequence is YELYETIGTG…MRNLLNHPWV (253 aa). ATP contacts are provided by residues 17-25 and K40; that span reads IGTGGFAKV. Phosphothreonine; by autocatalysis is present on T56. The active-site Proton acceptor is the D132. Residue Y163 is modified to Phosphotyrosine; by autocatalysis. T167 is subject to Phosphothreonine; by autocatalysis. A phosphoserine; by autocatalysis mark is found at S171 and S253. Residues 282-321 are UBA-like; the sequence is LDEDCVTELSVHHRSSRQTMEDLISSWQYDHLTATYLLLL. The interval 326 to 643 is autoinhibitory region; the sequence is RGKPARLQLL…VEDILSGCKM (318 aa). Phosphoserine; by autocatalysis occurs at positions 336 and 343. S352 is subject to Phosphoserine. Residues S399 and S423 each carry the phosphoserine; by autocatalysis modification. T486 is subject to Phosphothreonine; by autocatalysis. Residue S490 is modified to Phosphoserine. A Phosphoserine; by autocatalysis modification is found at S497. Phosphothreonine is present on T510. At S521 the chain carries Phosphoserine; by autocatalysis. At T531 the chain carries Phosphothreonine; by autocatalysis. In terms of domain architecture, KA1 spans 594–643; it reads SDFGKVTMQFELEVCQLQRPDVVGIRRQRLKGDAWVYKRLVEDILSGCKM.

Belongs to the protein kinase superfamily. CAMK Ser/Thr protein kinase family. SNF1 subfamily. Monomer. Interacts with ZNF622 and PPP1R8. Post-translationally, autophosphorylated: autophosphorylation of the T-loop at Thr-167 and Ser-171 is required for activation. In terms of tissue distribution, expressed in testis, ovary, thymus, spleen and T-cell. Expressed by neural progenitors: highly enriched in cultures containing multipotent progenitors.

It localises to the cell membrane. It carries out the reaction L-tyrosyl-[protein] + ATP = O-phospho-L-tyrosyl-[protein] + ADP + H(+). It catalyses the reaction L-seryl-[protein] + ATP = O-phospho-L-seryl-[protein] + ADP + H(+). The enzyme catalyses L-threonyl-[protein] + ATP = O-phospho-L-threonyl-[protein] + ADP + H(+). Activated by autophosphorylation of the T-loop at Thr-167 and Ser-171: in contrast to other members of the SNF1 subfamily, phosphorylation at Thr-167 is not mediated by STK11/LKB1 but via autophosphorylation instead. Inhibited by calcium-binding. Kinase activity is also regulated by reducing agents: dithiothreitol (DTT) or reduced glutathione are required for kinase activity in vitro; such dependence is however not due to the presence of disulfide bonds. Serine/threonine-protein kinase involved in various processes such as cell cycle regulation, self-renewal of stem cells, apoptosis and splicing regulation. Has a broad substrate specificity; phosphorylates BCL2L14, CDC25B, MAP3K5/ASK1 and ZNF622. Acts as an activator of apoptosis by phosphorylating and activating MAP3K5/ASK1. Acts as a regulator of cell cycle, notably by mediating phosphorylation of CDC25B, promoting localization of CDC25B to the centrosome and the spindle poles during mitosis. Plays a key role in cell proliferation. Required for proliferation of embryonic and postnatal multipotent neural progenitors. Phosphorylates and inhibits BCL2L14. Also involved in the inhibition of spliceosome assembly during mitosis by phosphorylating ZNF622, thereby contributing to its redirection to the nucleus. May also play a role in primitive hematopoiesis. The polypeptide is Maternal embryonic leucine zipper kinase (Melk) (Mus musculus (Mouse)).